The following is a 229-amino-acid chain: Clathrin light chain B (229 aa).

2 stretches are compositionally biased toward low complexity: residues 1–17 (MAED…GAPE) and 45–58 (GAPA…AQPG). A disordered region spans residues 1 to 70 (MAEDFGFFSS…SGAGSEDMST (70 aa)). Residues S11 and S13 each carry the phosphoserine modification. Residues 93–155 (ADRLTQEPES…QVEKNKINNR (63 aa)) form an involved in binding clathrin heavy chain region. T187 carries the phosphothreonine modification. Residues C199 and C209 are joined by a disulfide bond. K204 is subject to N6-acetyllysine. S217 bears the Phosphoserine mark.

Belongs to the clathrin light chain family. Clathrin coats are formed from molecules containing 3 heavy chains and 3 light chains. Interacts (via N-terminus) with HIP1. Interacts with HIP1R.

It is found in the cytoplasmic vesicle membrane. The protein localises to the membrane. It localises to the coated pit. Its function is as follows. Clathrin is the major protein of the polyhedral coat of coated pits and vesicles. The protein is Clathrin light chain B (Cltb) of Mus musculus (Mouse).